The primary structure comprises 477 residues: MLTVSVKWQKKVFESIEIDTSQPPFVFKAQLYDLSGVPPERQKIMVKGGLLKDDADWSTLGLKNGQKLMMMGTADEIVKAPEKGPVFMEDLPEEQQAANLGYSAGLVNLGNTCYMNSTMQCLISVPELKSELSNYQSARTKDVDQTSHMLTVATRELFSELDKSVKAVAPMPFWMVLQKKYPQFAQLHNGNHMQQDAEECWTQMLYTLSQSLKLPSPSEDPDAVKALFGLNLLNRLHCQESSEESSETESVFSLKCHISHEVNHLHEGLKHGLKGELEKTSPSLGRTAVYVKESLIDSLPRYLTVQFVRFFWKRESNQKAKILRKVDYPLELDIYDLCSEDLRKKLEAPRQKLRDIEGQKLGLQASAKSSSKGDDVKMTDAEGSSNQSGESSTGDQQEGASPHMTGIYDLVSVLTHKGRSADSGHYVAWVKQESGKWVQYDDANTSLQRGEDIIKLSGGGDWHMAYIVMYKARLISM.

The Ubiquitin-like domain maps to 2–77 (LTVSVKWQKK…LMMMGTADEI (76 aa)). The USP domain maps to 104–473 (AGLVNLGNTC…MAYIVMYKAR (370 aa)). Cys-113 acts as the Nucleophile in catalysis. A calmodulin-binding region spans residues 171–190 (MPFWMVLQKKYPQFAQLHNG). Residues 364-401 (QASAKSSSKGDDVKMTDAEGSSNQSGESSTGDQQEGAS) form a disordered region. Positions 371–380 (SKGDDVKMTD) are enriched in basic and acidic residues. Residues 382–399 (EGSSNQSGESSTGDQQEG) are compositionally biased toward polar residues. The Proton acceptor role is filled by His-425.

The protein belongs to the peptidase C19 family. Interacts with calmodulin (CaM).

The enzyme catalyses Thiol-dependent hydrolysis of ester, thioester, amide, peptide and isopeptide bonds formed by the C-terminal Gly of ubiquitin (a 76-residue protein attached to proteins as an intracellular targeting signal).. Recognizes and hydrolyzes the peptide bond at the C-terminal Gly of ubiquitin. Involved in the processing of poly-ubiquitin precursors as well as that of ubiquitinated proteins. The chain is Ubiquitin carboxyl-terminal hydrolase 7 (UBP7) from Arabidopsis thaliana (Mouse-ear cress).